A 255-amino-acid chain; its full sequence is Pimeloyl-[acyl-carrier protein] methyl ester esterase (255 aa).

Residues 16–241 (LVLVHGWGMN…QSSHAPFMTE (226 aa)) enclose the AB hydrolase-1 domain. Substrate is bound by residues W22, 82 to 83 (SL), and 143 to 147 (FMALQ). S82 (nucleophile) is an active-site residue. Residues D207 and H235 contribute to the active site. H235 is a binding site for substrate.

The protein belongs to the AB hydrolase superfamily. Carboxylesterase BioH family. As to quaternary structure, monomer.

Its subcellular location is the cytoplasm. The catalysed reaction is 6-carboxyhexanoyl-[ACP] methyl ester + H2O = 6-carboxyhexanoyl-[ACP] + methanol + H(+). The protein operates within cofactor biosynthesis; biotin biosynthesis. The physiological role of BioH is to remove the methyl group introduced by BioC when the pimeloyl moiety is complete. It allows to synthesize pimeloyl-ACP via the fatty acid synthetic pathway through the hydrolysis of the ester bonds of pimeloyl-ACP esters. This Vibrio cholerae serotype O1 (strain ATCC 39315 / El Tor Inaba N16961) protein is Pimeloyl-[acyl-carrier protein] methyl ester esterase.